We begin with the raw amino-acid sequence, 679 residues long: Glycine--tRNA ligase beta subunit (679 aa).

Belongs to the class-II aminoacyl-tRNA synthetase family. In terms of assembly, tetramer of two alpha and two beta subunits.

The protein resides in the cytoplasm. The catalysed reaction is tRNA(Gly) + glycine + ATP = glycyl-tRNA(Gly) + AMP + diphosphate. The polypeptide is Glycine--tRNA ligase beta subunit (Streptococcus gordonii (strain Challis / ATCC 35105 / BCRC 15272 / CH1 / DL1 / V288)).